The sequence spans 482 residues: MVAMFQEDNGTSSVASSPLQVFSTMSLNRPTLLASSSPFHCLKDLKPEERGLYLIHLLLTCANHVASGSLQNANAALEQLSHLASPDGDTMQRIAAYFTEALANRILKSWPGLYKALNATQTRTNNVSEEIHVRRLFFEMFPILKVSYLLTNRAILEAMEGEKMVHVIDLDASEPAQWLALLQAFNSRPEGPPHLRITGVHHQKEVLEQMAHRLIEEAEKLDIPFQFNPVVSRLDCLNVEQLRVKTGEALAVSSVLQLHTFLASDDDLMRKNCALRFQNNPSGVDLQRVLMMSHGSAAEARENDMSNNNGYSPSGDSASSLPLPSSGRTDSFLNAIWGLSPKVMVVTEQDSDHNGSTLMERLLESLYTYAALFDCLETKVPRTSQDRIKVEKMLFGEEIKNIISCEGFERRERHEKLEKWSQRIDLAGFGNVPLSYYAMLQARRLLQGCGFDGYRIKEESGCAVICWQDRPLYSVSAWRCRK.

One can recognise a GRAS domain in the interval Leu45 to Arg479. Positions Leu52 to Lys115 are leucine repeat I (LRI). The VHIID stretch occupies residues Arg134–Gly199. The short motif at Val165 to Asp169 is the VHIID element. The leucine repeat II (LRII) stretch occupies residues Gln209–Gln241. Residues Leu250–Asn401 are PFYRE. Residues Glu302–Pro324 are disordered. Over residues Met305–Pro324 the composition is skewed to polar residues. Positions Ser404–Arg479 are SAW.

Belongs to the GRAS family. Binds to zinc finger proteins MGP/IDD3, IDD4, IDD5, BIB/IDD9 and JKD/IDD10. In terms of tissue distribution, expressed in seedlings, root epidermis, leaves, flowers and siliques.

It localises to the nucleus. Its function is as follows. Probable transcription factor involved in plant development. This is Scarecrow-like protein 3 from Arabidopsis thaliana (Mouse-ear cress).